The sequence spans 84 residues: Agaphelin (84 aa).

The first 26 residues, 1–26 (MKMRVHLLAVSVLLVVLALQTTPAEA), serve as a signal peptide directing secretion. Positions 29–82 (NSEMATCACQLIYRPVCASNNESYSNECVLKCASETPTGRSIGLHKVKDGNCNG) constitute a Kazal-like domain. Disulfide bonds link Cys35-Cys60, Cys37-Cys56, and Cys45-Cys80. Asn49 carries an N-linked (GlcNAc...) asparagine glycan.

In terms of assembly, interacts with human ELANE.

It localises to the secreted. Functions as a slow and tight inhibitor of host neutrophil elastase (ELANE). Inhibits host proteinase 3 (PRTN3) and chymotrypsin. Does not inhibit other host proteases involved in coagulation or inflammation, such as cathepsin G (CTSG), trypsin, chymase, matriptase, beta-tryptase, kallikrein, urokinase-type plasminogen activator (PLAU), coagulation factors Xa (F10), XIa (F11), XIIa (F12), plasmin (PLG), thrombin (F2) and tissue-type plasminogen activator (PLAT). Inhibits host neutrophil chemotaxis induced by N-formylmethionine-leucyl-phenylalanine (fMLP) in vitro. Inhibits ELANE-mediated potentiation of platelet aggregation induced by CTSG in the host. Does not affect CTSG- or collagen-induced platelet aggregation. Blocks cleavage of tissue factor pathway inhibitor (TFPI) by ELANE in the host. Inhibits neutrophil-induced coagulation in the host by interfering with neutrophil extracellular traps (NET) formation. Exhibits anti-inflammatory activity. Reduces ischemia-induced activation of MAPK and NF-kappa-B pathways in the host. Decreases CCL2 and IL8 production in IL4- or lipopolysaccharide (LPS)-stimulated host epithelial cells. Reduces caspase-3 (CASP3)-dependent apoptosis in damaged host tissues. This is Agaphelin from Anopheles gambiae (African malaria mosquito).